A 315-amino-acid chain; its full sequence is Probable cell division protein kinase ECU11_1290 (315 aa).

The region spanning Tyr-13 to Val-294 is the Protein kinase domain. Residues Ile-19–Val-27 and Lys-42 contribute to the ATP site. The active-site Proton acceptor is Asp-138.

This sequence belongs to the protein kinase superfamily. CMGC Ser/Thr protein kinase family. CDC2/CDKX subfamily.

It is found in the nucleus. The enzyme catalyses L-seryl-[protein] + ATP = O-phospho-L-seryl-[protein] + ADP + H(+). It carries out the reaction L-threonyl-[protein] + ATP = O-phospho-L-threonyl-[protein] + ADP + H(+). Its function is as follows. May play a role in the control of the eukaryotic cell cycle. The polypeptide is Probable cell division protein kinase ECU11_1290 (Encephalitozoon cuniculi (strain GB-M1) (Microsporidian parasite)).